An 88-amino-acid polypeptide reads, in one-letter code: Cell division topological specificity factor (88 aa).

Belongs to the MinE family.

Its function is as follows. Prevents the cell division inhibition by proteins MinC and MinD at internal division sites while permitting inhibition at polar sites. This ensures cell division at the proper site by restricting the formation of a division septum at the midpoint of the long axis of the cell. In Clostridium novyi (strain NT), this protein is Cell division topological specificity factor.